The chain runs to 435 residues: Methylenetetrahydrofolate--tRNA-(uracil-5-)-methyltransferase TrmFO (435 aa).

Residue 9 to 14 coordinates FAD; sequence GAGLAG.

Belongs to the MnmG family. TrmFO subfamily. The cofactor is FAD.

It is found in the cytoplasm. It catalyses the reaction uridine(54) in tRNA + (6R)-5,10-methylene-5,6,7,8-tetrahydrofolate + NADH + H(+) = 5-methyluridine(54) in tRNA + (6S)-5,6,7,8-tetrahydrofolate + NAD(+). The enzyme catalyses uridine(54) in tRNA + (6R)-5,10-methylene-5,6,7,8-tetrahydrofolate + NADPH + H(+) = 5-methyluridine(54) in tRNA + (6S)-5,6,7,8-tetrahydrofolate + NADP(+). Catalyzes the folate-dependent formation of 5-methyl-uridine at position 54 (M-5-U54) in all tRNAs. In Staphylococcus haemolyticus (strain JCSC1435), this protein is Methylenetetrahydrofolate--tRNA-(uracil-5-)-methyltransferase TrmFO.